A 147-amino-acid chain; its full sequence is E3 ubiquitin-protein ligase RHA2B (147 aa).

The RING-type; atypical zinc-finger motif lies at 74-116 (CIVCLSKLKTGEEVRKLDCRHVFHKQCLEGWLQHLNFNCPLCR).

As to quaternary structure, interacts with NAC19. As to expression, expressed in vascular tissue, root tips, embryos and pistils.

It is found in the cytoplasm. The protein resides in the nucleus. The catalysed reaction is S-ubiquitinyl-[E2 ubiquitin-conjugating enzyme]-L-cysteine + [acceptor protein]-L-lysine = [E2 ubiquitin-conjugating enzyme]-L-cysteine + N(6)-ubiquitinyl-[acceptor protein]-L-lysine.. The protein operates within protein modification; protein ubiquitination. In terms of biological role, E3 ubiquitin-protein ligase involved in the positive regulation of abscisic acid (ABA) signaling and responses to salt and osmotic stresses during seed germination and early seedling development. Acts additively with RHA2A in regulating ABA signaling and drought response. Possesses E3 ubiquitin ligase activity in vitro. In Arabidopsis thaliana (Mouse-ear cress), this protein is E3 ubiquitin-protein ligase RHA2B.